We begin with the raw amino-acid sequence, 331 residues long: Probable zinc-binding oxidoreductase, mitochondrial (331 aa).

The span at 1–29 (MASVTSVPKTGRSVNQDVPATTLTLQTRP) shows a compositional bias: polar residues. Positions 1–34 (MASVTSVPKTGRSVNQDVPATTLTLQTRPTPAPN) are disordered.

The protein belongs to the zinc-containing alcohol dehydrogenase family. Quinone oxidoreductase subfamily.

It localises to the mitochondrion. In Arthroderma benhamiae (strain ATCC MYA-4681 / CBS 112371) (Trichophyton mentagrophytes), this protein is Probable zinc-binding oxidoreductase, mitochondrial.